Here is a 349-residue protein sequence, read N- to C-terminus: N-formyl peptide receptor 3 (349 aa).

Residues 1 to 27 lie on the Extracellular side of the membrane; sequence METNFSIPLNETEEVLPEPAGHTVLWI. N4 and N10 each carry an N-linked (GlcNAc...) asparagine glycan. A helical transmembrane segment spans residues 28–50; that stretch reads FSLLVHGVTFIFGVLGNGLVIWV. The Cytoplasmic segment spans residues 51–61; sequence AGFLMTRTVNT. The helical transmembrane segment at 62 to 83 threads the bilayer; that stretch reads ICYLNLALADFSFSAILPFHMV. Topologically, residues 84 to 100 are extracellular; it reads SVAMREKWPFGSFLCKL. A disulfide bridge links C98 with C176. The helical transmembrane segment at 101-121 threads the bilayer; it reads VHVMIDINLFVSVYLITIIAL. The Cytoplasmic segment spans residues 122 to 140; sequence DRCICVLHPAWAQNHRTMS. The chain crosses the membrane as a helical span at residues 141 to 162; it reads LAKRVMTGLWILTIVLTLPNFI. The Extracellular segment spans residues 163–205; the sequence is FWTTISTTNGDTYCIFNFPFWGDTAVERLNVFITMAKVFLILH. A helical transmembrane segment spans residues 206-226; sequence FIIGFSMPMSIITVCYGIIAA. Over 227 to 242 the chain is Cytoplasmic; the sequence is KIHRNHMIKSSRPLRV. Residues 243 to 266 form a helical membrane-spanning segment; it reads FAAVVASFFICWFPYELIGILMAV. Residues 267–286 lie on the Extracellular side of the membrane; the sequence is WLKEMLLNGKYKIILVLINP. A helical membrane pass occupies residues 287–306; that stretch reads TSSLAFFNSCLNPILYVFLG. Over 307 to 349 the chain is Cytoplasmic; it reads SNFQERLIRSLPTSLERALTEVPDSAQTSNTHTTSASPPEETE. The segment at 327–349 is disordered; sequence EVPDSAQTSNTHTTSASPPEETE. The segment covering 331–343 has biased composition (polar residues); it reads SAQTSNTHTTSAS.

The protein belongs to the G-protein coupled receptor 1 family.

It localises to the cell membrane. Functionally, low affinity receptor for N-formyl-methionyl peptides, which are powerful neutrophils chemotactic factors. Binding of FMLP to the receptor causes activation of neutrophils. This response is mediated via a G-protein that activates a phosphatidylinositol-calcium second messenger system. The protein is N-formyl peptide receptor 3 (FPR3) of Gorilla gorilla gorilla (Western lowland gorilla).